Consider the following 350-residue polypeptide: Secreted effector protein PipB2 (350 aa).

Pentapeptide repeat domains are found at residues alanine 162 to glycine 201, threonine 202 to glycine 241, cysteine 247 to aspartate 286, and alanine 287 to histidine 326.

In terms of assembly, interacts with the host kinesin light chain (KLC), a subunit of the kinesin-1 motor complex.

Its subcellular location is the secreted. The protein resides in the host membrane. Its function is as follows. Effector proteins function to alter host cell physiology and promote bacterial survival in host tissues. Involved in the reorganization of late endosome/lysosome (LE/Lys) compartments in mammalian cells. Necessary and sufficient to link kinesin-1 onto the Salmonella-containing vacuole (SCV) membrane. Required for centrifugal extension of lysosomal glycoprotein-rich membrane tubules, known as Salmonella-induced filaments (Sifs), away from the SCV and toward the cell periphery. Required for virulence, but not for intracellular survival and replication in phagocytic cells. In Salmonella choleraesuis (strain SC-B67), this protein is Secreted effector protein PipB2 (pipB2).